The primary structure comprises 417 residues: Serine hydroxymethyltransferase (417 aa).

Residues Leu-121 and 125–127 (GHL) contribute to the (6S)-5,6,7,8-tetrahydrofolate site. Lys-229 is modified (N6-(pyridoxal phosphate)lysine). A (6S)-5,6,7,8-tetrahydrofolate-binding site is contributed by 355-357 (SPF).

Belongs to the SHMT family. Homodimer. Requires pyridoxal 5'-phosphate as cofactor.

Its subcellular location is the cytoplasm. It catalyses the reaction (6R)-5,10-methylene-5,6,7,8-tetrahydrofolate + glycine + H2O = (6S)-5,6,7,8-tetrahydrofolate + L-serine. It functions in the pathway one-carbon metabolism; tetrahydrofolate interconversion. Its pathway is amino-acid biosynthesis; glycine biosynthesis; glycine from L-serine: step 1/1. In terms of biological role, catalyzes the reversible interconversion of serine and glycine with tetrahydrofolate (THF) serving as the one-carbon carrier. This reaction serves as the major source of one-carbon groups required for the biosynthesis of purines, thymidylate, methionine, and other important biomolecules. Also exhibits THF-independent aldolase activity toward beta-hydroxyamino acids, producing glycine and aldehydes, via a retro-aldol mechanism. The protein is Serine hydroxymethyltransferase of Salmonella choleraesuis (strain SC-B67).